Here is a 64-residue protein sequence, read N- to C-terminus: Large ribosomal subunit protein bL35 (64 aa).

It belongs to the bacterial ribosomal protein bL35 family.

In Desulforamulus reducens (strain ATCC BAA-1160 / DSM 100696 / MI-1) (Desulfotomaculum reducens), this protein is Large ribosomal subunit protein bL35.